The primary structure comprises 507 residues: Hippocampus abundant transcript-like protein 1 (507 aa).

A disordered region spans residues 1-22 (MSTDGESPEEPGWKAVASPKAS). Over 1–51 (MSTDGESPEEPGWKAVASPKASAMPEKRGSAQAASSSWLQGFGQPSVYHAA) the chain is Extracellular. The chain crosses the membrane as a helical span at residues 52-72 (FVIFFEFFAWGLLTTPMLTVL). The Cytoplasmic portion of the chain corresponds to 73-84 (HETFPQHTFLMN). Residues 85–105 (GLIQGVKGLLSFLSAPLIGAL) form a helical membrane-spanning segment. The Extracellular portion of the chain corresponds to 106-113 (SDVWGRKP). A helical transmembrane segment spans residues 114 to 134 (FLLGTVFFTCFPIPLMRISPW). Residues 135-136 (WY) are Cytoplasmic-facing. A helical transmembrane segment spans residues 137–157 (FGMISVSGVFSVTFSVIFAYV). Residues 158 to 170 (ADFTQEHERSTAY) lie on the Extracellular side of the membrane. A helical transmembrane segment spans residues 171 to 191 (GWVSATFAASLVSSPAIGTYL). Residues 192-198 (SSNYGDS) are Cytoplasmic-facing. A helical membrane pass occupies residues 199-219 (LVVLVATVVALLDICFILVAV). The Extracellular segment spans residues 220-257 (PESLPEKIRPASWGAQISWKQADPFASLKKVGKDSTVL). The helical transmembrane segment at 258–278 (LICITVFLSYLPEAGQYSSFF) threads the bilayer. Over 279 to 283 (LYLRQ) the chain is Cytoplasmic. The chain crosses the membrane as a helical span at residues 284-304 (VIGFGSVKIVAFIAMVGILSI). Residues 305 to 323 (LAQTVFLSKLMRSLGNKNT) lie on the Extracellular side of the membrane. The chain crosses the membrane as a helical span at residues 324–344 (VLLGLGFQILQLAWYGFGAQA). Residues 345–347 (WMM) are Cytoplasmic-facing. The chain crosses the membrane as a helical span at residues 348–368 (WAAGTVAAMSSITFPAVSALI). Residues 369 to 389 (SRNAESDQQGVAQGIITGIRG) are Extracellular-facing. A helical transmembrane segment spans residues 390–410 (LCNGLGPALYGFIFYLFHVEL). Residues 411–430 (NELGPKLDSDNDPLQGAFIP) are Cytoplasmic-facing. A helical transmembrane segment spans residues 431 to 451 (GPPFLFGACIVLMSFLVALFI). At 452-507 (PEYRKTGGVQKHNNSISGSLSTPPERGSDEDIEPLLQDSNIWELSSEEPGNQCTEL) the chain is on the extracellular side. A compositionally biased stretch (polar residues) spans 462 to 473 (KHNNSISGSLST). The disordered stretch occupies residues 462 to 483 (KHNNSISGSLSTPPERGSDEDI). Residue Asn464 is glycosylated (N-linked (GlcNAc...) asparagine).

The protein belongs to the major facilitator superfamily.

The protein localises to the membrane. In Rattus norvegicus (Rat), this protein is Hippocampus abundant transcript-like protein 1.